The chain runs to 910 residues: Protein kinase 3 (910 aa).

Over residues 119 to 129 (SPSGGGGGGSG) the composition is skewed to gly residues. 3 disordered regions span residues 119–239 (SPSG…PNLI), 270–295 (FNNN…KTPT), and 391–454 (NKDD…NDKK). Composition is skewed to low complexity over residues 130 to 160 (VSSN…QPTS), 169 to 196 (LSES…QSTS), 209 to 220 (GLSGSSTSSSSA), 227 to 239 (NNNA…PNLI), 270 to 290 (FNNN…TTST), and 422 to 450 (INQP…TSQT). The Protein kinase domain maps to 498 to 763 (FELLKVLGVG…FEEISSHPFF (266 aa)). ATP is bound by residues 504 to 512 (LGVGSFGRV) and lysine 527. The active-site Proton acceptor is the aspartate 621. Threonine 664 is subject to Phosphothreonine; by autocatalysis. One can recognise an AGC-kinase C-terminal domain in the interval 764 to 854 (ELIPWRMLES…NKEEEDGIMG (91 aa)). Disordered regions lie at residues 786–812 (EISL…TLSC) and 859–910 (IGSI…KGSV). Composition is skewed to low complexity over residues 788 to 809 (SLPN…NNLT) and 859 to 886 (IGSI…SGGS).

Belongs to the protein kinase superfamily. AGC Ser/Thr protein kinase family.

The enzyme catalyses L-seryl-[protein] + ATP = O-phospho-L-seryl-[protein] + ADP + H(+). It catalyses the reaction L-threonyl-[protein] + ATP = O-phospho-L-threonyl-[protein] + ADP + H(+). The polypeptide is Protein kinase 3 (pkgC) (Dictyostelium discoideum (Social amoeba)).